We begin with the raw amino-acid sequence, 785 residues long: Endonuclease MutS2 (785 aa).

335 to 342 (GPNTGGKT) contacts ATP. The Smr domain maps to 710–785 (LDLRGERYED…GNGVTIVEFK (76 aa)).

The protein belongs to the DNA mismatch repair MutS family. MutS2 subfamily. In terms of assembly, homodimer. Binds to stalled ribosomes, contacting rRNA.

Functionally, endonuclease that is involved in the suppression of homologous recombination and thus may have a key role in the control of bacterial genetic diversity. Its function is as follows. Acts as a ribosome collision sensor, splitting the ribosome into its 2 subunits. Detects stalled/collided 70S ribosomes which it binds and splits by an ATP-hydrolysis driven conformational change. Acts upstream of the ribosome quality control system (RQC), a ribosome-associated complex that mediates the extraction of incompletely synthesized nascent chains from stalled ribosomes and their subsequent degradation. Probably generates substrates for RQC. This is Endonuclease MutS2 from Listeria monocytogenes serotype 4b (strain CLIP80459).